The primary structure comprises 447 residues: Phosphoglucosamine mutase (447 aa).

Ser-100 (phosphoserine intermediate) is an active-site residue. Mg(2+) is bound by residues Ser-100, Asp-239, Asp-241, and Asp-243. Ser-100 is subject to Phosphoserine.

Belongs to the phosphohexose mutase family. The cofactor is Mg(2+). Post-translationally, activated by phosphorylation.

The enzyme catalyses alpha-D-glucosamine 1-phosphate = D-glucosamine 6-phosphate. In terms of biological role, catalyzes the conversion of glucosamine-6-phosphate to glucosamine-1-phosphate. This Halalkalibacterium halodurans (strain ATCC BAA-125 / DSM 18197 / FERM 7344 / JCM 9153 / C-125) (Bacillus halodurans) protein is Phosphoglucosamine mutase.